Consider the following 139-residue polypeptide: Ribulose bisphosphate carboxylase small subunit (139 aa).

This sequence belongs to the RuBisCO small chain family. Heterohexadecamer of 8 large and 8 small subunits.

It localises to the plastid. It is found in the chloroplast. RuBisCO catalyzes two reactions: the carboxylation of D-ribulose 1,5-bisphosphate, the primary event in carbon dioxide fixation, as well as the oxidative fragmentation of the pentose substrate in the photorespiration process. Both reactions occur simultaneously and in competition at the same active site. Although the small subunit is not catalytic it is essential for maximal activity. The protein is Ribulose bisphosphate carboxylase small subunit of Chrysotila carterae (Marine alga).